Consider the following 263-residue polypeptide: Putative TATA-binding protein pB263R (263 aa).

It belongs to the asfivirus B263R family.

In terms of biological role, putative TATA-binding protein. The protein is Putative TATA-binding protein pB263R of Ornithodoros (relapsing fever ticks).